The following is a 322-amino-acid chain: Cytochrome c biogenesis protein CcsA (322 aa).

Helical transmembrane passes span 2 to 22 (LFAT…SIVI), 44 to 64 (GMIA…LSSG), 68 to 88 (LSNL…LHTI), 143 to 163 (MLLS…ILII), 226 to 246 (VISL…VWAN), 260 to 274 (TWAF…IYLH), and 289 to 309 (VASI…LLGI).

This sequence belongs to the CcmF/CycK/Ccl1/NrfE/CcsA family. As to quaternary structure, may interact with Ccs1.

The protein resides in the plastid. It localises to the chloroplast thylakoid membrane. Required during biogenesis of c-type cytochromes (cytochrome c6 and cytochrome f) at the step of heme attachment. The chain is Cytochrome c biogenesis protein CcsA from Brachypodium distachyon (Purple false brome).